The sequence spans 417 residues: Gamma-glutamyl phosphate reductase (417 aa).

The protein belongs to the gamma-glutamyl phosphate reductase family.

The protein localises to the cytoplasm. It carries out the reaction L-glutamate 5-semialdehyde + phosphate + NADP(+) = L-glutamyl 5-phosphate + NADPH + H(+). It functions in the pathway amino-acid biosynthesis; L-proline biosynthesis; L-glutamate 5-semialdehyde from L-glutamate: step 2/2. Functionally, catalyzes the NADPH-dependent reduction of L-glutamate 5-phosphate into L-glutamate 5-semialdehyde and phosphate. The product spontaneously undergoes cyclization to form 1-pyrroline-5-carboxylate. This chain is Gamma-glutamyl phosphate reductase, found in Escherichia coli O45:K1 (strain S88 / ExPEC).